The following is a 360-amino-acid chain: Transcription factor MYB39 (360 aa).

HTH myb-type domains are found at residues 10–62 (DKGV…MNYL) and 63–117 (RPDI…RKKL). 2 consecutive DNA-binding regions (H-T-H motif) follow at residues 38–62 (WRSL…MNYL) and 90–113 (WSKI…NTHM). Residues 299 to 324 (PSTGSVSVSPETTSLNHPSTAQHSSG) form a disordered region.

The protein localises to the nucleus. This chain is Transcription factor MYB39 (MYB39), found in Arabidopsis thaliana (Mouse-ear cress).